A 122-amino-acid chain; its full sequence is MSDKPISKSRRDAVKVMLGTAAAIPMINLVGFGTARASAPANAVAADDATAIALKYNQDATKSERVAAARPGLPPEEQHCANCQFMQADAAGATDEWKGCQLFPGKLINVNGWCASWTLKAG.

An N-terminal signal peptide occupies residues 1–37 (MSDKPISKSRRDAVKVMLGTAAAIPMINLVGFGTARA). Cys80, Cys83, Cys100, and Cys114 together coordinate [4Fe-4S] cluster.

This sequence belongs to the high-potential iron-sulfur protein (HiPIP) family. As to quaternary structure, homodimer.

It localises to the periplasm. Its function is as follows. Specific class of high-redox-potential 4Fe-4S ferredoxins. Functions in anaerobic electron transport in most purple and in some other photosynthetic bacteria and in at least one genus (Paracoccus) of halophilic, denitrifying bacteria. This Allochromatium vinosum (strain ATCC 17899 / DSM 180 / NBRC 103801 / NCIMB 10441 / D) (Chromatium vinosum) protein is High-potential iron-sulfur protein (hip).